A 418-amino-acid chain; its full sequence is Tyrosine--tRNA ligase (418 aa).

Tyr-34 lines the L-tyrosine pocket. The short motif at 39 to 48 is the 'HIGH' region element; it reads PTGDSMHIGH. L-tyrosine is bound by residues Tyr-166 and Gln-170. The short motif at 228 to 232 is the 'KMSKS' region element; that stretch reads KFGKT. Lys-231 is a binding site for ATP. The S4 RNA-binding domain occupies 350 to 418; sequence QNIVLWLVDA…KKRYFLAHVK (69 aa).

This sequence belongs to the class-I aminoacyl-tRNA synthetase family. TyrS type 1 subfamily. As to quaternary structure, homodimer.

The protein localises to the cytoplasm. The catalysed reaction is tRNA(Tyr) + L-tyrosine + ATP = L-tyrosyl-tRNA(Tyr) + AMP + diphosphate + H(+). Functionally, catalyzes the attachment of tyrosine to tRNA(Tyr) in a two-step reaction: tyrosine is first activated by ATP to form Tyr-AMP and then transferred to the acceptor end of tRNA(Tyr). This is Tyrosine--tRNA ligase from Lactiplantibacillus plantarum (strain ATCC BAA-793 / NCIMB 8826 / WCFS1) (Lactobacillus plantarum).